We begin with the raw amino-acid sequence, 377 residues long: MRGQRSLLLGPARLCLRLLLLLGYRRRCPPLLRGLVQRWRYGKVCLRSLLYNSFGGSDTAVDAAFEPVYWLVDNVIRWFGVVFVVLVIVLTGSIVAIAYLCVLPLILRTYSVPRLCWHFFYSHWNLILIVFHYYQAITTPPGYPPQGRNDIATVSICKKCIYPKPARTHHCSICNRCVLKMDHHCPWLNNCVGHYNHRYFFSFCFFMTLGCVYCSYGSWDLFREAYAAIEKMKQLDKNKLQAVANQTYHQTPPPIFSFRERMTHKSLVYLWFLCSSVALALGALTVWHAVLISRGETSIERHINKKERRRLQAKGRVFRNPYNYGCLDNWKVFLGVDTGRHWLTRVLLPSSHLPHGNGMSWEPPPWVTAHSASVMAV.

The Cytoplasmic portion of the chain corresponds to 1 to 77; it reads MRGQRSLLLG…VYWLVDNVIR (77 aa). Residues 78 to 98 traverse the membrane as a helical segment; the sequence is WFGVVFVVLVIVLTGSIVAIA. At 99–116 the chain is on the lumenal side; sequence YLCVLPLILRTYSVPRLC. The chain crosses the membrane as a helical span at residues 117–137; sequence WHFFYSHWNLILIVFHYYQAI. The Cytoplasmic portion of the chain corresponds to 138 to 198; it reads TTPPGYPPQG…NNCVGHYNHR (61 aa). In terms of domain architecture, DHHC spans 155–205; it reads SICKKCIYPKPARTHHCSICNRCVLKMDHHCPWLNNCVGHYNHRYFFSFCF. C185 (S-palmitoyl cysteine intermediate) is an active-site residue. Residues 199-219 traverse the membrane as a helical segment; sequence YFFSFCFFMTLGCVYCSYGSW. At 220 to 266 the chain is on the lumenal side; the sequence is DLFREAYAAIEKMKQLDKNKLQAVANQTYHQTPPPIFSFRERMTHKS. A helical transmembrane segment spans residues 267–287; that stretch reads LVYLWFLCSSVALALGALTVW. The Cytoplasmic portion of the chain corresponds to 288 to 377; it reads HAVLISRGET…TAHSASVMAV (90 aa).

It belongs to the DHHC palmitoyltransferase family. In terms of assembly, interacts with ABL1. Interacts with COPS5/JAB1.

Its subcellular location is the endoplasmic reticulum membrane. The enzyme catalyses L-cysteinyl-[protein] + hexadecanoyl-CoA = S-hexadecanoyl-L-cysteinyl-[protein] + CoA. Its function is as follows. Palmitoyl acyltransferase that mediates palmitoylation of proteins such as PLN and ZDHHC6. Required during embryonic heart development and cardiac function, possibly by mediating palmitoylation of PLN, thereby affecting PLN phosphorylation and homooligomerization. Also required for eye development. Palmitoylates ZDHHC6, affecting the quaternary assembly of ZDHHC6, its localization, stability and function. May play a role in DNA damage response. May be involved in apoptosis regulation. Involved in the proliferation of neural stem cells by regulating the FGF/ERK pathway. The chain is Palmitoyltransferase ZDHHC16 from Macaca fascicularis (Crab-eating macaque).